The following is a 120-amino-acid chain: U13-lycotoxin-Ls1a (120 aa).

Residues 1–16 (MKTLFVLISILYAVYC) form the signal peptide. Residues 17–54 (FSSEEDVDSAYLANELEPVEDINSEQYAALEPKEEQER) constitute a propeptide that is removed on maturation. Disulfide bonds link C56–C70, C63–C76, C69–C87, and C78–C85. The 40-residue stretch at 56 to 95 (CADMGQDCKDDCDCCLNIATCNCWFGRYFCSCTFGDYQTC) folds into the Agouti domain.

It belongs to the neurotoxin 05 (agouti) family. Post-translationally, contains 6 disulfide bonds. In terms of tissue distribution, expressed by the venom gland.

The protein resides in the secreted. The chain is U13-lycotoxin-Ls1a from Lycosa singoriensis (Wolf spider).